The primary structure comprises 648 residues: Cell surface glycoprotein MUC18 (648 aa).

A signal peptide spans Met1–Gly23. 2 Ig-like V-type domains span residues Val24–Gln131 and Pro141–Thr244. Over Val24–Lys560 the chain is Extracellular. 5 disulfide bridges follow: Cys50–Cys118, Cys163–Cys225, Cys274–Cys322, Cys367–Cys409, and Cys454–Cys501. A glycan (N-linked (GlcNAc...) asparagine) is linked at Asn58. Ig-like C2-type domains lie at Pro246 to Met332, Pro337 to Ser426, and Ser432 to Thr512. The interval Pro282–Asn304 is disordered. The N-linked (GlcNAc...) asparagine glycan is linked to Asn510. Positions Asp527–Ser549 are enriched in polar residues. The disordered stretch occupies residues Asp527–Leu554. The chain crosses the membrane as a helical span at residues Gly561 to Leu581. Over Tyr582–His648 the chain is Cytoplasmic. Ser608 and Ser616 each carry phosphoserine. The segment at Leu626–His648 is disordered. The segment covering Gly631–His648 has biased composition (basic and acidic residues).

As to expression, detected in lung, uterus and placenta (at protein level). Detected in heart, lung, kidney, adrenal gland, intestine, testis, skeletal muscle and aorta. Detected at low levels in adult brain, in particular in brain stem and spinal cord, but also in hippocampus, olfactory bulb and striatum (at protein level).

The protein localises to the cell membrane. Its subcellular location is the perikaryon. Its function is as follows. Plays a role in cell adhesion, and in cohesion of the endothelial monolayer at intercellular junctions in vascular tissue. Its expression may allow melanoma cells to interact with cellular elements of the vascular system, thereby enhancing hematogeneous tumor spread. Could be an adhesion molecule active in neural crest cells during embryonic development. Acts as a surface receptor that triggers tyrosine phosphorylation of FYN and PTK2/FAK1, and a transient increase in the intracellular calcium concentration. The chain is Cell surface glycoprotein MUC18 (Mcam) from Rattus norvegicus (Rat).